The chain runs to 130 residues: Large ribosomal subunit protein bL20 (130 aa).

Belongs to the bacterial ribosomal protein bL20 family.

In terms of biological role, binds directly to 23S ribosomal RNA and is necessary for the in vitro assembly process of the 50S ribosomal subunit. It is not involved in the protein synthesizing functions of that subunit. The sequence is that of Large ribosomal subunit protein bL20 from Salinispora arenicola (strain CNS-205).